The chain runs to 185 residues: Ribosome-recycling factor (185 aa).

Belongs to the RRF family.

It is found in the cytoplasm. In terms of biological role, responsible for the release of ribosomes from messenger RNA at the termination of protein biosynthesis. May increase the efficiency of translation by recycling ribosomes from one round of translation to another. This is Ribosome-recycling factor from Bacillus pumilus (strain SAFR-032).